A 242-amino-acid chain; its full sequence is Zinc import ATP-binding protein ZnuC (242 aa).

Residues Ile24–Tyr241 enclose the ABC transporter domain. Gly56–Thr63 is a binding site for ATP.

The protein belongs to the ABC transporter superfamily. Zinc importer (TC 3.A.1.15.5) family. The complex is composed of two ATP-binding proteins (ZnuC), two transmembrane proteins (ZnuB) and a solute-binding protein (ZnuA).

The protein localises to the cell inner membrane. It catalyses the reaction Zn(2+)(out) + ATP(in) + H2O(in) = Zn(2+)(in) + ADP(in) + phosphate(in) + H(+)(in). In terms of biological role, part of the ABC transporter complex ZnuABC involved in zinc import. Responsible for energy coupling to the transport system. The polypeptide is Zinc import ATP-binding protein ZnuC (Ehrlichia canis (strain Jake)).